The chain runs to 642 residues: MPIITLPDGSQRQFDNPVSVLEVAQSIGSGLAKATIAGRVNGERRDASDMISEDANLEIITAKDEDGLEIIRHSTAHLLGHAIKQLFPNVKMAIGPTIDNGFYYDIDLDRSLTQEDIDTLEKRMLELAKTNYDVIKKRVSWQEARDTFESRAEPYKIAILDENIAKDDQPALYHHEEYIDMCRGPHVPNMRFCHHFKLMKVAGAYWRGNSDNKMLQRIYGTAWADKKQLADYLHRLEEAAKRDHRKIGKALDLYHMQEEAPGMVFWHNDGWTIFRELETFVRTKLKEYDYQEVKGPFMMDRVLWERTGHWQNYADLMFTTQSENREYAIKPMNCPGHVQIFNQGLKSYRDLPIRMAEFGSCHRNEPSGSLHGLMRVRGFTQDDAHIFCTEDQIESEVTSCIKMVYDIYSTFGFTDIFVKLSTRPEKRIGEDVMWDRAEQGLANALKHNGLEYEIQEGEGAFYGPKIEFALRDCLDREWQCGTIQLDFALPGRLDATYVAEDNARRTPVMIHRAILGSIERFIGIITEEYAGFFPTWLAPIQAVVMNITDSQADYVQKVVKQFSEAGLRVKADIRNEKVGFKIREHTLRRVPYMLVCGDKEIVENKIAVRTRKGTDLGTFSVEEFVEILKQQVRKRELTLLGE.

The region spanning M1–T61 is the TGS domain. The tract at residues D243–P534 is catalytic. The Zn(2+) site is built by C334, H385, and H511.

This sequence belongs to the class-II aminoacyl-tRNA synthetase family. As to quaternary structure, homodimer. Zn(2+) is required as a cofactor.

The protein localises to the cytoplasm. The enzyme catalyses tRNA(Thr) + L-threonine + ATP = L-threonyl-tRNA(Thr) + AMP + diphosphate + H(+). Its function is as follows. Catalyzes the attachment of threonine to tRNA(Thr) in a two-step reaction: L-threonine is first activated by ATP to form Thr-AMP and then transferred to the acceptor end of tRNA(Thr). Also edits incorrectly charged L-seryl-tRNA(Thr). This chain is Threonine--tRNA ligase, found in Histophilus somni (strain 129Pt) (Haemophilus somnus).